The sequence spans 74 residues: Hadrucalcin (74 aa).

Residues 1 to 27 (MKTSSLTIIFIAVIITIICLNIHDIEA) form the signal peptide. Positions 28 to 39 (REIEFNAGRVVR) are excised as a propeptide. 3 disulfides stabilise this stretch: Cys44-Cys58, Cys51-Cys62, and Cys57-Cys73. An essential for stimulation of [3H]ryanodine binding to RYR1 region spans residues 64-65 (RR).

As to expression, expressed by the venom gland.

It is found in the secreted. This toxin activates ryanodine receptors RyR1 and RyR2 by inducing a long-lasting subconductance state (35% of the full conductance stateon RyR1). Furthermore, it triggers calcium release from sarcoplasmic vesicles (11.8 nM are enough to induce a sharp release on RyR1, and 55% of the total calcium is released after toxin (100 nM) addition on RyR1) probably by acting as a cell-penetrating peptide (CPP). In addition, it has been shown to dose-dependently stimulate ryanodine binding to RyR1 (EC(50)=14.8 nM). It also augments the bell-shaped calcium-[3H]ryanodine binding curve that is maximal at about 10 uM calcium concentration. It binds a different site as ryanodine. It acts synergistically with caffeine. In vivo, intracerebroventricular injection into mice induces neurotoxic symptoms, followed by death. The polypeptide is Hadrucalcin (Hoffmannihadrurus gertschi (Scorpion)).